Consider the following 236-residue polypeptide: ATP synthase subunit 4, mitochondrial (236 aa).

Residues 1–29 (MAFRALTTKAAARPLLALGPRSVAMGARY) constitute a mitochondrion transit peptide.

Belongs to the eukaryotic ATPase subunit B family. F-type ATPases have 2 components, CF(1) - the catalytic core - and CF(0) - the membrane proton channel. In yeast, the dimeric form of ATP synthase consists of 17 polypeptides: alpha, beta, gamma, delta, epsilon, 4 (B), 5 (OSCP), 6 (A), 8, 9 (C), d, E (Tim11), f, g, h, i/j and k.

It localises to the mitochondrion. It is found in the mitochondrion inner membrane. Functionally, mitochondrial membrane ATP synthase (F(1)F(0) ATP synthase or Complex V) produces ATP from ADP in the presence of a proton gradient across the membrane which is generated by electron transport complexes of the respiratory chain. F-type ATPases consist of two structural domains, F(1) - containing the extramembraneous catalytic core, and F(0) - containing the membrane proton channel, linked together by a central stalk and a peripheral stalk. During catalysis, ATP synthesis in the catalytic domain of F(1) is coupled via a rotary mechanism of the central stalk subunits to proton translocation. Part of the complex F(0) domain and the peripheric stalk, which acts as a stator to hold the catalytic alpha(3)beta(3) subcomplex and subunit a/ATP6 static relative to the rotary elements. This chain is ATP synthase subunit 4, mitochondrial (ATP4), found in Eremothecium gossypii (strain ATCC 10895 / CBS 109.51 / FGSC 9923 / NRRL Y-1056) (Yeast).